The chain runs to 157 residues: Cell number regulator 10 (157 aa).

2 consecutive transmembrane segments (helical) span residues 41–57 (DCGLCCLTCWCPCITFG) and 66–83 (GATSCGTAGALYAVLAYF).

It belongs to the cornifelin family. As to expression, expressed in roots, leaves, stalks, immature ears and silks.

It localises to the membrane. This chain is Cell number regulator 10 (CNR10), found in Zea mays (Maize).